We begin with the raw amino-acid sequence, 115 residues long: Large ribosomal subunit protein mL60 (115 aa).

The N-terminal 23 residues, 1-23 (MLGAFNSTLARFGGLVHKVPWRL), are a transit peptide targeting the mitochondrion. The interval 88–115 (AGLQGFRKGVHKSPKWTRSTNRVNPTGF) is disordered. The span at 103–115 (WTRSTNRVNPTGF) shows a compositional bias: polar residues.

It belongs to the mitochondrion-specific ribosomal protein mL60 family. In terms of assembly, component of the mitochondrial large ribosomal subunit (mt-LSU). Mature yeast 74S mitochondrial ribosomes consist of a small (37S) and a large (54S) subunit. The 37S small subunit contains a 15S ribosomal RNA (15S mt-rRNA) and at least 32 different proteins. The 54S large subunit contains a 21S rRNA (21S mt-rRNA) and at least 45 different proteins.

It is found in the mitochondrion. Functionally, component of the mitochondrial ribosome (mitoribosome), a dedicated translation machinery responsible for the synthesis of mitochondrial genome-encoded proteins, including at least some of the essential transmembrane subunits of the mitochondrial respiratory chain. The mitoribosomes are attached to the mitochondrial inner membrane and translation products are cotranslationally integrated into the membrane. This is Large ribosomal subunit protein mL60 (mrpl31) from Schizosaccharomyces pombe (strain 972 / ATCC 24843) (Fission yeast).